The primary structure comprises 209 residues: Uracil phosphoribosyltransferase (209 aa).

Residues arginine 79, arginine 104, and 131–139 (DPMLATGGS) each bind 5-phospho-alpha-D-ribose 1-diphosphate. Uracil is bound by residues isoleucine 194 and 199 to 201 (GDA). Aspartate 200 contributes to the 5-phospho-alpha-D-ribose 1-diphosphate binding site.

This sequence belongs to the UPRTase family. Mg(2+) serves as cofactor.

It catalyses the reaction UMP + diphosphate = 5-phospho-alpha-D-ribose 1-diphosphate + uracil. It participates in pyrimidine metabolism; UMP biosynthesis via salvage pathway; UMP from uracil: step 1/1. Allosterically activated by GTP. In terms of biological role, catalyzes the conversion of uracil and 5-phospho-alpha-D-ribose 1-diphosphate (PRPP) to UMP and diphosphate. The chain is Uracil phosphoribosyltransferase from Geobacter sulfurreducens (strain ATCC 51573 / DSM 12127 / PCA).